A 245-amino-acid chain; its full sequence is tRNA (guanine-N(7)-)-methyltransferase (245 aa).

S-adenosyl-L-methionine is bound by residues Gly-70, 93–94, 126–127, and Leu-146; these read EI and NA. The active site involves Asp-149. 224–226 provides a ligand contact to S-adenosyl-L-methionine; sequence SEE.

It belongs to the class I-like SAM-binding methyltransferase superfamily. TrmB family.

It is found in the nucleus. It carries out the reaction guanosine(46) in tRNA + S-adenosyl-L-methionine = N(7)-methylguanosine(46) in tRNA + S-adenosyl-L-homocysteine. It participates in tRNA modification; N(7)-methylguanine-tRNA biosynthesis. In terms of biological role, catalyzes the formation of N(7)-methylguanine at position 46 (m7G46) in tRNA. The chain is tRNA (guanine-N(7)-)-methyltransferase from Aedes aegypti (Yellowfever mosquito).